Here is a 475-residue protein sequence, read N- to C-terminus: Sulfate adenylyltransferase subunit 1 (475 aa).

The 215-residue stretch at 25 to 239 folds into the tr-type G domain; the sequence is KSLLRFLTCG…EVLETVEIQR (215 aa). The G1 stretch occupies residues 34–41; it reads GSVDDGKS. 34-41 contributes to the GTP binding site; it reads GSVDDGKS. Positions 92–96 are G2; the sequence is GITID. The tract at residues 113 to 116 is G3; the sequence is DTPG. GTP-binding positions include 113-117 and 168-171; these read DTPGH and NKMD. Residues 168-171 are G4; it reads NKMD. A G5 region spans residues 206 to 208; it reads SAL.

Belongs to the TRAFAC class translation factor GTPase superfamily. Classic translation factor GTPase family. CysN/NodQ subfamily. As to quaternary structure, heterodimer composed of CysD, the smaller subunit, and CysN.

The enzyme catalyses sulfate + ATP + H(+) = adenosine 5'-phosphosulfate + diphosphate. It participates in sulfur metabolism; hydrogen sulfide biosynthesis; sulfite from sulfate: step 1/3. Functionally, with CysD forms the ATP sulfurylase (ATPS) that catalyzes the adenylation of sulfate producing adenosine 5'-phosphosulfate (APS) and diphosphate, the first enzymatic step in sulfur assimilation pathway. APS synthesis involves the formation of a high-energy phosphoric-sulfuric acid anhydride bond driven by GTP hydrolysis by CysN coupled to ATP hydrolysis by CysD. The protein is Sulfate adenylyltransferase subunit 1 of Shigella dysenteriae serotype 1 (strain Sd197).